A 778-amino-acid polypeptide reads, in one-letter code: Arf-GAP with coiled-coil, ANK repeat and PH domain-containing protein 2 (778 aa).

The BAR domain maps to 1–226; sequence MKMTVDFEEC…MKDLGAQLDR (226 aa). Positions 266-361 constitute a PH domain; the sequence is GIVMEGYLFK…WIKAVQTSIA (96 aa). The tract at residues 371 to 391 is disordered; the sequence is SEKLDKKSSPSTGSLDSGNES. Over residues 379–388 the composition is skewed to polar residues; the sequence is SPSTGSLDSG. A phosphoserine mark is found at S384 and S387. The 122-residue stretch at 399 to 520 folds into the Arf-GAP domain; it reads ESALQRVQCI…KFVDKYSISL (122 aa). The C4-type zinc-finger motif lies at 414-437; that stretch reads CCDCGLADPRWASINLGITLCIEC. S521 is subject to Phosphoserine. Residues 540-599 form a disordered region; sequence SISKFGPGDQVRASAQSSVRSNDSGIQQSSDDGRESLPSTVSANSLYEPEGERQDSSMFL. The segment covering 552–569 has biased composition (polar residues); sequence ASAQSSVRSNDSGIQQSS. 2 positions are modified to phosphoserine: S581 and S584. 3 ANK repeats span residues 640 to 669, 673 to 702, and 706 to 735; these read NKAT…NVNQ, QGRG…NQHA, and EGKD…NEEM. Position 742 is a phosphotyrosine (Y742). S775 bears the Phosphoserine mark.

As to quaternary structure, interacts (via KANK domains) with RAB35 (GTP-bound form); the interaction is direct and probably recruits ACAP2 to membranes including plasma membrane. Interacts with MICALL1; the interaction is indirect through RAB35. In terms of tissue distribution, widely expressed. Highest level in lung.

The protein localises to the cell membrane. The protein resides in the endosome membrane. GAP activity stimulated by phosphatidylinositol 4,5-bisphosphate (PIP2) and phosphatidic acid. Functionally, GTPase-activating protein (GAP) for ADP ribosylation factor 6 (ARF6). Doesn't show GAP activity for RAB35. The polypeptide is Arf-GAP with coiled-coil, ANK repeat and PH domain-containing protein 2 (ACAP2) (Homo sapiens (Human)).